The primary structure comprises 596 residues: Alpha-1,3-galactosidase A (596 aa).

The signal sequence occupies residues 1–21; it reads MQNPVASLLFILAMLTGPCPA. The segment at 23 to 57 is disordered; sequence DYPERTERTQSAGNHVWHIDPDKGNDGNPGTAPST. 4 PbH1 repeats span residues 351–373, 482–504, 515–537, and 547–569; these read RGKIIVKDCVLGASHDDAVNVHG, RKPVLVERCRFEKTGMPAILVED, VRNMTISRNTFIQCGEAVIQIVP, and HRNITITGNTFDLKNGTAIRIRH.

Belongs to the glycosyl hydrolase 110 family. A subfamily.

The enzyme catalyses Hydrolysis of terminal, non-reducing branched (1-&gt;3)-alpha-D-galactosidic residues, producing free D-galactose.. It catalyses the reaction Hydrolysis of terminal, non-reducing alpha-D-galactose residues in alpha-D-galactosides, including galactose oligosaccharides, galactomannans and galactolipids.. Its function is as follows. Alpha-galactosidase that specifically removes branched alpha-1,3-linked galactose residues present in blood group B antigens. Has no activity toward linear alpha-1,3-linked galactose residues. The polypeptide is Alpha-1,3-galactosidase A (glaA) (Akkermansia muciniphila (strain ATCC BAA-835 / DSM 22959 / JCM 33894 / BCRC 81048 / CCUG 64013 / CIP 107961 / Muc)).